A 267-amino-acid polypeptide reads, in one-letter code: Serine/threonine-protein kinase 1 (267 aa).

The Protein kinase domain maps to 18–266 (IQNNVRLVDG…YETVIKHSFL (249 aa)). ATP-binding positions include 24–32 (LVDGKFGKM) and Lys47. Asp134 functions as the Proton acceptor in the catalytic mechanism.

Belongs to the protein kinase superfamily. Ser/Thr protein kinase family.

It carries out the reaction L-seryl-[protein] + ATP = O-phospho-L-seryl-[protein] + ADP + H(+). It catalyses the reaction L-threonyl-[protein] + ATP = O-phospho-L-threonyl-[protein] + ADP + H(+). The sequence is that of Serine/threonine-protein kinase 1 (PK1) from Heliothis zea nuclear polyhedrosis virus (HzSNPV).